The chain runs to 189 residues: Streptothricin acetyltransferase (189 aa).

The 146-residue stretch at Phe44–Pro189 folds into the N-acetyltransferase domain. The segment at Leu55–Ala76 is disordered. Over residues Gly63–Asp75 the composition is skewed to acidic residues.

The protein belongs to the acetyltransferase family. GNAT subfamily.

It carries out the reaction streptothricin F + acetyl-CoA = N(beta)-acetylstreptothricin F + CoA + H(+). Involved in resistance to streptothricin, a broad-spectrum antibiotic produced by streptomycetes. Detoxifies streptothricin via acetylation of the beta amino group of the first beta-lysyl moiety of streptothricin. In Streptomyces lavendulae, this protein is Streptothricin acetyltransferase.